The primary structure comprises 346 residues: NADH-quinone oxidoreductase subunit H (346 aa).

A run of 9 helical transmembrane segments spans residues 13–33, 51–71, 83–103, 116–136, 162–182, 191–211, 244–264, 278–298, and 310–330; these read ILLI…ALAF, PNVV…KYIV, AVYF…WAVI, VAVL…IMGG, IGLI…TAIV, LLNW…ISAL, FMIG…LLFF, VFWM…VKAI, and LGWK…AFMA.

This sequence belongs to the complex I subunit 1 family. In terms of assembly, NDH-1 is composed of 14 different subunits. Subunits NuoA, H, J, K, L, M, N constitute the membrane sector of the complex.

It localises to the cell inner membrane. It carries out the reaction a quinone + NADH + 5 H(+)(in) = a quinol + NAD(+) + 4 H(+)(out). In terms of biological role, NDH-1 shuttles electrons from NADH, via FMN and iron-sulfur (Fe-S) centers, to quinones in the respiratory chain. The immediate electron acceptor for the enzyme in this species is believed to be ubiquinone. Couples the redox reaction to proton translocation (for every two electrons transferred, four hydrogen ions are translocated across the cytoplasmic membrane), and thus conserves the redox energy in a proton gradient. This subunit may bind ubiquinone. This chain is NADH-quinone oxidoreductase subunit H, found in Jannaschia sp. (strain CCS1).